A 591-amino-acid polypeptide reads, in one-letter code: V-type ATP synthase alpha chain (591 aa).

ATP is bound at residue 233-240 (GPFGAGKT).

This sequence belongs to the ATPase alpha/beta chains family.

It carries out the reaction ATP + H2O + 4 H(+)(in) = ADP + phosphate + 5 H(+)(out). Its function is as follows. Produces ATP from ADP in the presence of a proton gradient across the membrane. The V-type alpha chain is a catalytic subunit. This chain is V-type ATP synthase alpha chain, found in Streptococcus pyogenes serotype M3 (strain ATCC BAA-595 / MGAS315).